The following is an 83-amino-acid chain: Small ribosomal subunit protein bS16 (83 aa).

This sequence belongs to the bacterial ribosomal protein bS16 family.

The protein is Small ribosomal subunit protein bS16 of Pseudomonas putida (strain W619).